The following is a 309-amino-acid chain: Aspartate carbamoyltransferase catalytic subunit (309 aa).

Residues Arg56 and Thr57 each coordinate carbamoyl phosphate. Lys84 contacts L-aspartate. Carbamoyl phosphate-binding residues include Arg106, His136, and Gln139. The L-aspartate site is built by Arg169 and Arg221. Carbamoyl phosphate-binding residues include Ala264 and Pro265.

It belongs to the aspartate/ornithine carbamoyltransferase superfamily. ATCase family. In terms of assembly, heterododecamer (2C3:3R2) of six catalytic PyrB chains organized as two trimers (C3), and six regulatory PyrI chains organized as three dimers (R2).

The catalysed reaction is carbamoyl phosphate + L-aspartate = N-carbamoyl-L-aspartate + phosphate + H(+). It participates in pyrimidine metabolism; UMP biosynthesis via de novo pathway; (S)-dihydroorotate from bicarbonate: step 2/3. In terms of biological role, catalyzes the condensation of carbamoyl phosphate and aspartate to form carbamoyl aspartate and inorganic phosphate, the committed step in the de novo pyrimidine nucleotide biosynthesis pathway. The chain is Aspartate carbamoyltransferase catalytic subunit from Limosilactobacillus reuteri subsp. reuteri (strain JCM 1112) (Lactobacillus reuteri).